Consider the following 441-residue polypeptide: Putative F-box protein At1g33530 (441 aa).

Residues 91–137 form the F-box domain; the sequence is TTLAVELPDVLVEEILQRLPVKYLVRLKSISKGWKSLIESDHLAEKH.

This Arabidopsis thaliana (Mouse-ear cress) protein is Putative F-box protein At1g33530.